Reading from the N-terminus, the 90-residue chain is Mitochondrial import inner membrane translocase subunit tim10 (90 aa).

A Twin CX3C motif motif is present at residues 36-61; it reads CTLKCIDKSYREGDLSKGESVCLDRC. 2 disulfide bridges follow: Cys-36–Cys-61 and Cys-40–Cys-57.

The protein belongs to the small Tim family. In terms of assembly, heterohexamer; composed of 3 copies of tim9 and 3 copies of tim10, named soluble 70 kDa complex. Associates directly with the TIM22 complex, whose core is composed of tim22 and tim54. Interacts with the transmembrane regions of multi-pass transmembrane proteins in transit.

The protein localises to the mitochondrion inner membrane. In terms of biological role, mitochondrial intermembrane chaperone that participates in the import and insertion of multi-pass transmembrane proteins into the mitochondrial inner membrane. Also required for the transfer of beta-barrel precursors from the TOM complex to the sorting and assembly machinery (SAM complex) of the outer membrane. Acts as a chaperone-like protein that protects the hydrophobic precursors from aggregation and guide them through the mitochondrial intermembrane space. The protein is Mitochondrial import inner membrane translocase subunit tim10 (tim10) of Neurospora crassa (strain ATCC 24698 / 74-OR23-1A / CBS 708.71 / DSM 1257 / FGSC 987).